The chain runs to 226 residues: Nucleoside triphosphate pyrophosphatase (226 aa).

D79 functions as the Proton acceptor in the catalytic mechanism. The tract at residues 204–226 (WSRGTSTHPTPGTSATPKPNPGA) is disordered. Residues 206 to 220 (RGTSTHPTPGTSATP) are compositionally biased toward polar residues.

This sequence belongs to the Maf family. It depends on a divalent metal cation as a cofactor.

It is found in the cytoplasm. It carries out the reaction a ribonucleoside 5'-triphosphate + H2O = a ribonucleoside 5'-phosphate + diphosphate + H(+). It catalyses the reaction a 2'-deoxyribonucleoside 5'-triphosphate + H2O = a 2'-deoxyribonucleoside 5'-phosphate + diphosphate + H(+). Functionally, nucleoside triphosphate pyrophosphatase. May have a dual role in cell division arrest and in preventing the incorporation of modified nucleotides into cellular nucleic acids. The protein is Nucleoside triphosphate pyrophosphatase of Salinispora tropica (strain ATCC BAA-916 / DSM 44818 / JCM 13857 / NBRC 105044 / CNB-440).